The primary structure comprises 147 residues: Lysozyme C-3 (147 aa).

Residues Met-1–Gly-18 form the signal peptide. A C-type lysozyme domain is found at Lys-19–Leu-147. 4 cysteine pairs are disulfide-bonded: Cys-24-Cys-145, Cys-48-Cys-133, Cys-83-Cys-99, and Cys-95-Cys-113. Active-site residues include Glu-53 and Asp-71.

This sequence belongs to the glycosyl hydrolase 22 family. Monomer. As to expression, expressed in stomach.

The protein localises to the secreted. The enzyme catalyses Hydrolysis of (1-&gt;4)-beta-linkages between N-acetylmuramic acid and N-acetyl-D-glucosamine residues in a peptidoglycan and between N-acetyl-D-glucosamine residues in chitodextrins.. Functionally, lysozymes have primarily a bacteriolytic function; those in tissues and body fluids are associated with the monocyte-macrophage system and enhance the activity of immunoagents. The protein is Lysozyme C-3 of Ovis aries (Sheep).